The primary structure comprises 72 residues: uncharacterized protein (72 aa).

The chain crosses the membrane as a helical span at residues 46–66; the sequence is AIFVFNLCFIPNLCVACIFNV.

Its subcellular location is the membrane. This is an uncharacterized protein from Saccharomyces cerevisiae (strain ATCC 204508 / S288c) (Baker's yeast).